The following is a 252-amino-acid chain: 3-dehydroquinate dehydratase (252 aa).

3-dehydroquinate-binding positions include Ser21, 46-48 (EWR), and Arg82. Residue His143 is the Proton donor/acceptor of the active site. Lys170 functions as the Schiff-base intermediate with substrate in the catalytic mechanism. Positions 213, 232, and 236 each coordinate 3-dehydroquinate.

Belongs to the type-I 3-dehydroquinase family. Homodimer.

The catalysed reaction is 3-dehydroquinate = 3-dehydroshikimate + H2O. It functions in the pathway metabolic intermediate biosynthesis; chorismate biosynthesis; chorismate from D-erythrose 4-phosphate and phosphoenolpyruvate: step 3/7. Functionally, involved in the third step of the chorismate pathway, which leads to the biosynthesis of aromatic amino acids. Catalyzes the cis-dehydration of 3-dehydroquinate (DHQ) and introduces the first double bond of the aromatic ring to yield 3-dehydroshikimate. The chain is 3-dehydroquinate dehydratase from Escherichia coli O127:H6 (strain E2348/69 / EPEC).